The following is a 143-amino-acid chain: Transcriptional regulator MraZ (143 aa).

2 consecutive SpoVT-AbrB domains span residues E5–V47 and A76–R119.

This sequence belongs to the MraZ family. As to quaternary structure, forms oligomers.

The protein resides in the cytoplasm. It localises to the nucleoid. In Roseiflexus castenholzii (strain DSM 13941 / HLO8), this protein is Transcriptional regulator MraZ.